Here is a 1279-residue protein sequence, read N- to C-terminus: Botulinum-like toxin eBoNT/J (1279 aa).

Zn(2+) is bound at residue His225. Glu226 is a catalytic residue. Residues His229 and Glu269 each contribute to the Zn(2+) site. Cys424 and Cys438 are joined by a disulfide. Residues Leu435–Leu843 form a translocation domain (TD) region. The interval Ala476 to Val525 is belt; not required for channel formation. Residues Ile860 to Phe1080 are N-terminus of receptor binding domain (N-RBD). The tract at residues Glu1081–Asp1279 is C-terminus of receptor binding domain (C-RBD). Residues Ser1250–Tyr1253 carry the Host ganglioside-binding motif motif.

Belongs to the peptidase M27 family. Might be a disulfide-linked heterodimer of a light chain (LC) and heavy chain (HC). The cofactor is Zn(2+).

The protein localises to the secreted. It is found in the host cytoplasm. It localises to the host cytosol. The protein resides in the host cell membrane. Its subcellular location is the host cytoplasmic vesicle membrane. It catalyses the reaction Limited hydrolysis of proteins of the neuroexocytosis apparatus, synaptobrevins, SNAP25 or syntaxin. No detected action on small molecule substrates.. Its function is as follows. Strongly resembles a botulinum-type toxin, with the appropriate domains and residues to have proteolytic function, although its C-terminus (which binds to a eukaryotic host cell) is different enough from clostrial botulinum toxins that it might bind another cell target. Might be a precursor of a toxin that binds to an unknown eukaryotic cell receptor(s), and be taken up into the host cell via the endocytic pathway. When the pH of the putative toxin-containing endosome drops a structural rearrangement occurs so that the N-terminus of the heavy chain forms pores that allows the light chain to translocate into the cytosol. Once in the cytosol the disulfide bond linking the 2 subunits is reduced and light chain cleaves its target protein. This chain is Botulinum-like toxin eBoNT/J, found in Enterococcus sp. (strain 3G1_DIV0629).